A 1205-amino-acid polypeptide reads, in one-letter code: Adenine-specific methyltransferase BrxX (1205 aa).

Belongs to the methyltransferase superfamily. PglX adenine methyltransferase family. In terms of assembly, (Microbial infection) Interacts with phage T7 protein Ocr (AC P03775, gene 0.3) during an infection and when the protein is expressed from a plasmid; this interaction inhibits the enzymatic activity of PglX/BrxX through high-affinity binding. Forms a 2:2 tetrameric complex with phage T7 OCR.

The enzyme catalyses a 2'-deoxyadenosine in DNA + S-adenosyl-L-methionine = an N(6)-methyl-2'-deoxyadenosine in DNA + S-adenosyl-L-homocysteine + H(+). (Microbial infection) Methyltransferase activity is inhibited by phage T7 protein OCR (AC P03775, gene 0.3). Viability of cells overexpressing OCR is unaffected. In terms of biological role, BREX systems (bacteriophage exclusion) provide immunity against bacteriophage. Part of a type 1 BREX system which protects against dsDNA phage. This system allows phage adsorption but prevents phage DNA replication, without degradation of the phage DNA. Methylation of bacterial DNA by this protein guides self/non-self discrimination. When the brxA-brxB-brxC-pglX-pglZ-brxL genes are transformed into a susceptible E.coli strain (BW25113) they confer very high resistance to infection by bacteriophage VR7 and VpaE1, about 100-fold protection against lambda, T5 and T7 (probably with a mutated 0.3 gene) and no protection against RNA phage Qbeta, ssDNA phage M13 or dSDNA phage T4 and VR5. Glycosylated phage DNA is not susceptible to BREX. The BREX system does not confer resistance to lysogenic lambda phage, i.e. prophage that are integrated into the chromosomal DNA and then induced to form phage. Methylates the adenine in the fifth position of the hexamer 5'-GGTAAG-3' in genomic DNA; methylates the same sequence in the few phage that escape the BREX system. Methylated phage are now resistant to BREX, showing immunity is provided by an epigenetic modification. Expression of this protein alone has no effect on phage infection, does not lead to methylated DNA and mildly inhibits growth. This chain is Adenine-specific methyltransferase BrxX (pglX), found in Escherichia coli O9:H4 (strain HS).